Consider the following 524-residue polypeptide: B3 domain-containing protein Os07g0183700 (524 aa).

2 disordered regions span residues 94–152 and 191–232; these read DGEG…TSVS and PLQP…FQTQ. Pro residues predominate over residues 100–109; sequence CAPPPSPIPA. Low complexity-rich tracts occupy residues 110–124 and 200–232; these read GPASSTVSAASSAPA and AAAAAGSPSATTPEPGHGEATPTTSSSAQFQTQ. A DNA-binding region (TF-B3) is located at residues 336–434; that stretch reads SFVKPLTYTD…EMFMAVRRTR (99 aa).

The protein localises to the nucleus. This chain is B3 domain-containing protein Os07g0183700, found in Oryza sativa subsp. japonica (Rice).